Consider the following 283-residue polypeptide: GTPase Era (283 aa).

An Era-type G domain is found at tyrosine 7–glutamate 175. Residues glycine 15–serine 22 are G1. Glycine 15 to serine 22 is a GTP binding site. A G2 region spans residues asparagine 41–serine 45. A G3 region spans residues aspartate 62–glycine 65. GTP is bound by residues aspartate 62–valine 66 and asparagine 124–aspartate 127. The G4 stretch occupies residues asparagine 124–aspartate 127. Residues isoleucine 154–alanine 156 are G5. Residues isoleucine 198 to asparagine 283 enclose the KH type-2 domain.

Belongs to the TRAFAC class TrmE-Era-EngA-EngB-Septin-like GTPase superfamily. Era GTPase family. In terms of assembly, monomer.

The protein resides in the cytoplasm. It is found in the cell membrane. An essential GTPase that binds both GDP and GTP, with rapid nucleotide exchange. Plays a role in 16S rRNA processing and 30S ribosomal subunit biogenesis and possibly also in cell cycle regulation and energy metabolism. The polypeptide is GTPase Era (Buchnera aphidicola subsp. Acyrthosiphon pisum (strain Tuc7)).